A 272-amino-acid chain; its full sequence is Putative hydro-lyase BRADO2538 (272 aa).

The protein belongs to the D-glutamate cyclase family.

This Bradyrhizobium sp. (strain ORS 278) protein is Putative hydro-lyase BRADO2538.